Consider the following 153-residue polypeptide: Ribosomal RNA large subunit methyltransferase H (153 aa).

S-adenosyl-L-methionine is bound by residues L71, G102, and 121 to 126 (LSRMTL).

Belongs to the RNA methyltransferase RlmH family. As to quaternary structure, homodimer.

The protein resides in the cytoplasm. The catalysed reaction is pseudouridine(1915) in 23S rRNA + S-adenosyl-L-methionine = N(3)-methylpseudouridine(1915) in 23S rRNA + S-adenosyl-L-homocysteine + H(+). Its function is as follows. Specifically methylates the pseudouridine at position 1915 (m3Psi1915) in 23S rRNA. The sequence is that of Ribosomal RNA large subunit methyltransferase H from Anaeromyxobacter sp. (strain Fw109-5).